Reading from the N-terminus, the 28-residue chain is Kappa-buthitoxin-Tt2b (28 aa).

3 disulfide bridges follow: Cys2–Cys24, Cys7–Cys20, and Cys11–Cys26.

In terms of tissue distribution, expressed by the venom gland.

The protein localises to the secreted. Its function is as follows. Blocks potassium channels Shaker-IR (with inactivation domain removed) and hKv1.2/KCNA2. The polypeptide is Kappa-buthitoxin-Tt2b (Tityus trivittatus (Argentinean scorpion)).